Reading from the N-terminus, the 629-residue chain is Phosphatidylinositol-3,5-bisphosphate 3-phosphatase MTMR8 (629 aa).

One can recognise a Myotubularin phosphatase domain in the interval 126-500 (GWKLIDLKVD…FSFQFWCGMY (375 aa)). Residues asparagine 250, asparagine 275, and isoleucine 276 each coordinate a 1,2-diacyl-sn-glycero-3-phospho-(1D-myo-inositol-3,5-bisphosphate). The a 1,2-diacyl-sn-glycero-3-phospho-(1D-myo-inositol-3-phosphate) site is built by asparagine 250, asparagine 275, and isoleucine 276. The active-site Phosphocysteine intermediate is cysteine 338. 8 residues coordinate a 1,2-diacyl-sn-glycero-3-phospho-(1D-myo-inositol-3,5-bisphosphate): serine 339, aspartate 340, glycine 341, tryptophan 342, aspartate 343, arginine 344, lysine 380, and arginine 384. 6 residues coordinate a 1,2-diacyl-sn-glycero-3-phospho-(1D-myo-inositol-3-phosphate): serine 339, aspartate 340, glycine 341, tryptophan 342, aspartate 343, and arginine 344. Phosphate is bound by residues serine 339 and aspartate 340. Positions 342, 343, and 344 each coordinate phosphate. Position 384 (arginine 384) interacts with a 1,2-diacyl-sn-glycero-3-phospho-(1D-myo-inositol-3-phosphate). A coiled-coil region spans residues 517–543 (LLSCMNQKIKLEDNASELENKLPFLDG).

This sequence belongs to the protein-tyrosine phosphatase family. Non-receptor class myotubularin subfamily. Homodimer.

It is found in the nucleus envelope. The enzyme catalyses a 1,2-diacyl-sn-glycero-3-phospho-(1D-myo-inositol-3,5-bisphosphate) + H2O = a 1,2-diacyl-sn-glycero-3-phospho-(1D-myo-inositol-5-phosphate) + phosphate. It carries out the reaction a 1,2-diacyl-sn-glycero-3-phospho-(1D-myo-inositol-3-phosphate) + H2O = a 1,2-diacyl-sn-glycero-3-phospho-(1D-myo-inositol) + phosphate. It catalyses the reaction 1,2-dioctanoyl-sn-glycero-3-phospho-(1D-myo-inositol-3,5-bisphosphate) + H2O = 1,2-dioctanoyl-sn-glycero-3-phospho-(1D-myo-inositol-5-phosphate) + phosphate. Functionally, lipid phosphatase that specifically dephosphorylates the D-3 position of phosphatidylinositol 3-phosphate and phosphatidylinositol 3,5-bisphosphate, generating phosphatidylinositol and phosphatidylinositol 5-phosphate. The polypeptide is Phosphatidylinositol-3,5-bisphosphate 3-phosphatase MTMR8 (Gallus gallus (Chicken)).